The sequence spans 159 residues: MINYLKSFFLYEIVRGMVLTLKYFFKPKVTINYPYEKSPISPRFKGEHALRRYENGEERCIACKLCEAICPAQAIVIEADEREDGSRRTTRYDIDMTKCIYCGLCQEACPVDAIVEGPNFEFASLTHTALIYDKERLLQNGDRWEQALASKLHKDYEYR.

4Fe-4S ferredoxin-type domains follow at residues Arg51–Asp80 and Thr90–Asn119. Residues Cys60, Cys63, Cys66, Cys70, Cys99, Cys102, Cys105, and Cys109 each contribute to the [4Fe-4S] cluster site.

The protein belongs to the complex I 23 kDa subunit family. NDH-1 is composed of 14 different subunits. Subunits NuoA, H, J, K, L, M, N constitute the membrane sector of the complex. Requires [4Fe-4S] cluster as cofactor.

Its subcellular location is the cell inner membrane. It carries out the reaction a quinone + NADH + 5 H(+)(in) = a quinol + NAD(+) + 4 H(+)(out). Its function is as follows. NDH-1 shuttles electrons from NADH, via FMN and iron-sulfur (Fe-S) centers, to quinones in the respiratory chain. The immediate electron acceptor for the enzyme in this species is believed to be ubiquinone. Couples the redox reaction to proton translocation (for every two electrons transferred, four hydrogen ions are translocated across the cytoplasmic membrane), and thus conserves the redox energy in a proton gradient. The polypeptide is NADH-quinone oxidoreductase subunit I (Rickettsia conorii (strain ATCC VR-613 / Malish 7)).